The primary structure comprises 1222 residues: MLFNINEKGEPLVISFAPFLSPEAIKHLQENERCSDQSQKRTAQQIEAIYTSGQNILVSASAGSGKTFVMVERILDKILRGVSIDRLFISTFTVKAATELRERIENKLYSQIAQTTDFQMKVYLTEQLQSLGQADIGTMDAFAQKVVSRYGYSIGISSQFRIMQDKAEQDVLKQEVFSKLFSEFMNQKEAPVFRALVKNFSGNCKDTSAFRELVYTCYSFSQSTENPKIWLQENFLSAAKTYQRLEDIPDHDIELLLLAMQDTANQLRDVTDMEDYGQLTKAGSRSAKYTKHLTIIEKLSDWVRDFKCLYGKAGLDRLIRDVTGLIPSGNDVTVSKVKYPVFKTLHQKLKQFRHLETILMYQKDCFPLLEQLQDFVLAFSEAYLAVKIQESAFEFSDITHFAIKILEENTDIRQSYQQHYHEVMVDEYQDNNHMQERLLTLLSNGHNRFMVGDIKQSIYRFRQADPQIFNQKFRDYQKKTEQGKVILLKENFRSQSEVLNVSNAVFSHLMDESVGDVLYDEQHQLIAGSHAQTVPYLDRRAQLLLYNSDKDDGNAPSDSEGISFSEVTIVAKEIIKLHNDKGVPFEDITLLVSSRTRNDIISHTFNQYGIPIVTDGGQQNYLKSVEVMVMLDTLRTINNPRNDYALVALLRSPMFAFDEDDLARIALQKDNELDKDCLYDKIQRAVIGRGAHPELIHDTLLGKLNIFLKTLKSWRRYAKLGSLYDLIWKIFNDRFYFDFVASQAKAEQAQANLYALALRANQFEKSGYKGLYCFIKMIDKVLETQNDLADVEVAAPKQAVNLMTIHKSKGLQFPYVFILNCDKRFSMTDIHKSFILNRQHGIGIKYLADIKVLLGETTLNSVKVSMETLPYQLNKQELRLATLSEQMRLLYVAMTRAEKKVYFIGKASKSKSQDITDPKKLGKLLPLALREQLLTFQDWLLAIADVFSTEDLYFDVRFIEDSDLTQESVGRLQTPQLLNPDDLKDNRQSETIARALDMLEAVSQLNANYEAAIHLPTVRTPSQLKAAYEPLLEPIGVDIIEKSSRSLSDFTLPHFSKKVKVEASHIGSALHQLMQVLPLSKPINQQTLLDALREIDSNEEVKTALDLKKIESFFCDTSLGQFFQTYQKHLYREAPFAILKVDPISQEEYVLRGIIDAYFLFDDHIVLVDYKTDKYKQPIELKKRYQQQLELYAEALTQTYKLPVTKRYLVLMGGGKPEIVEV.

The 457-residue stretch at 39–495 (QKRTAQQIEA…ILLKENFRSQ (457 aa)) folds into the UvrD-like helicase ATP-binding domain. Residue 60–67 (ASAGSGKT) participates in ATP binding. The region spanning 524–810 (QLIAGSHAQT…NLMTIHKSKG (287 aa)) is the UvrD-like helicase C-terminal domain.

This sequence belongs to the helicase family. AddA subfamily. As to quaternary structure, heterodimer of AddA and AddB/RexB. The cofactor is Mg(2+).

It carries out the reaction Couples ATP hydrolysis with the unwinding of duplex DNA by translocating in the 3'-5' direction.. It catalyses the reaction ATP + H2O = ADP + phosphate + H(+). The heterodimer acts as both an ATP-dependent DNA helicase and an ATP-dependent, dual-direction single-stranded exonuclease. Recognizes the chi site generating a DNA molecule suitable for the initiation of homologous recombination. The AddA nuclease domain is required for chi fragment generation; this subunit has the helicase and 3' -&gt; 5' nuclease activities. This Streptococcus pyogenes serotype M12 (strain MGAS2096) protein is ATP-dependent helicase/nuclease subunit A.